A 97-amino-acid polypeptide reads, in one-letter code: MNLRPLHDRVIVKRLDQETKTASGIVIPDAAAEKPDQGEVLAIGPGKRDDKGAPIALDVKVGDRVLFGKYAGQTVKVDGQELLVMREEDIMAVVNAK.

Belongs to the GroES chaperonin family. Heptamer of 7 subunits arranged in a ring. Interacts with the chaperonin GroEL.

It is found in the cytoplasm. In terms of biological role, together with the chaperonin GroEL, plays an essential role in assisting protein folding. The GroEL-GroES system forms a nano-cage that allows encapsulation of the non-native substrate proteins and provides a physical environment optimized to promote and accelerate protein folding. GroES binds to the apical surface of the GroEL ring, thereby capping the opening of the GroEL channel. The polypeptide is Co-chaperonin GroES (Burkholderia cepacia (Pseudomonas cepacia)).